A 146-amino-acid chain; its full sequence is Deoxyuridine 5'-triphosphate nucleotidohydrolase (146 aa).

Substrate-binding positions include 65 to 67 (RSG), asparagine 78, 82 to 84 (LID), and methionine 92.

Belongs to the dUTPase family. Mg(2+) serves as cofactor.

It catalyses the reaction dUTP + H2O = dUMP + diphosphate + H(+). The protein operates within pyrimidine metabolism; dUMP biosynthesis; dUMP from dCTP (dUTP route): step 2/2. Its function is as follows. This enzyme is involved in nucleotide metabolism: it produces dUMP, the immediate precursor of thymidine nucleotides and it decreases the intracellular concentration of dUTP so that uracil cannot be incorporated into DNA. This chain is Deoxyuridine 5'-triphosphate nucleotidohydrolase, found in Thiobacillus denitrificans (strain ATCC 25259 / T1).